The chain runs to 311 residues: R2-like ligand binding oxidase (311 aa).

3 residues coordinate Mn(2+): E68, E101, and H104. The segment at residues 71 to 162 (VTQDIQPFMA…AAQVRASVTY (92 aa)) is a cross-link (3-(O4'-tyrosyl)-valine (Val-Tyr)). E101 is a Fe cation binding site. Fe cation-binding residues include E167, E202, and H205.

Belongs to the ribonucleoside diphosphate reductase small chain family. R2-like ligand binding oxidase subfamily. In terms of assembly, homodimer. Fe cation serves as cofactor. It depends on Mn(2+) as a cofactor.

Its function is as follows. Probable oxidase that might be involved in lipid metabolism. The chain is R2-like ligand binding oxidase from Mycolicibacterium paratuberculosis (strain ATCC BAA-968 / K-10) (Mycobacterium paratuberculosis).